The primary structure comprises 1109 residues: Coiled-coil domain-containing protein 158 (1109 aa).

Over residues 1 to 12 (MESKACESKNED) the composition is skewed to basic and acidic residues. The disordered stretch occupies residues 1 to 31 (MESKACESKNEDLLPSGITSKGGSSSPFFVT). The segment covering 17 to 31 (GITSKGGSSSPFFVT) has biased composition (polar residues). Coiled coils occupy residues 71–166 (GKEH…MLKD) and 242–828 (VEDQ…QEQE). Disordered regions lie at residues 843-897 (LQGP…DPTR) and 952-1061 (HRSN…TGKT). 3 stretches are compositionally biased toward polar residues: residues 862–882 (ASVT…SFLS), 953–970 (RSNN…SSET), and 988–998 (SCFTFTSTASP). Residues 999–1019 (SGKMSASRSFSSSPKKSPVHS) are compositionally biased toward low complexity. Polar residues-rich tracts occupy residues 1020-1037 (LLTS…QYRS) and 1043-1061 (SPTS…TGKT). Residues 1053 to 1109 (PSLETTGKTCQKLQNRLESLQTLVEDLQLKNQAMSSMIRNQEKRIQKVKDQEKMLLK) are a coiled coil.

The protein is Coiled-coil domain-containing protein 158 (Ccdc158) of Mus musculus (Mouse).